Reading from the N-terminus, the 178-residue chain is Hypoxanthine phosphoribosyltransferase (178 aa).

2 residues coordinate diphosphate: arginine 43 and glycine 44. Glutamate 99 provides a ligand contact to GMP. Residue glutamate 99 participates in IMP binding. Positions 99 and 100 each coordinate Mg(2+). Catalysis depends on aspartate 103, which acts as the Proton acceptor. Residues 103–108 (DSGNTL), lysine 131, and aspartate 159 each bind GMP. IMP is bound by residues 103-108 (DSGNTL) and lysine 131. Position 165 (arginine 165) interacts with diphosphate.

The protein belongs to the purine/pyrimidine phosphoribosyltransferase family. In terms of assembly, homotetramer. The cofactor is Mg(2+).

The protein resides in the cytoplasm. It carries out the reaction IMP + diphosphate = hypoxanthine + 5-phospho-alpha-D-ribose 1-diphosphate. It catalyses the reaction GMP + diphosphate = guanine + 5-phospho-alpha-D-ribose 1-diphosphate. It functions in the pathway purine metabolism; IMP biosynthesis via salvage pathway; IMP from hypoxanthine: step 1/1. Functionally, purine salvage pathway enzyme which catalyzes the transfer of the ribosyl-5-phosphate group from 5-phospho-alpha-D-ribose 1-diphosphate (PRPP) to the N9 position of hypoxanthine to yield IMP (inosine 5'-monophosphate). To a lesser extent, can also act on guanine leading to GMP, but shows a highly less efficient activity with xanthine. The chain is Hypoxanthine phosphoribosyltransferase (hpt) from Salmonella typhimurium (strain LT2 / SGSC1412 / ATCC 700720).